The chain runs to 217 residues: Very-long-chain (3R)-3-hydroxyacyl-CoA dehydratase PHS1 (217 aa).

Over 1 to 11 (MSKKLASPLSF) the chain is Cytoplasmic. A helical transmembrane segment spans residues 12–29 (LPLYNLLSAVGWSYLLYL). Topologically, residues 30-47 (VISLYPKVGQPAFFYQTK) are lumenal. Residues 48–66 (NVATLVQCGAIIEIINSFL) form a helical membrane-spanning segment. The Cytoplasmic segment spans residues 67–76 (GVVRSPLLTT). A helical transmembrane segment spans residues 77–94 (VAQVSSRLLVVLGIFQLL). The Lumenal segment spans residues 95–99 (PNTSG). A helical transmembrane segment spans residues 100 to 117 (VQSVVYISLLLAWSITEI). The Cytoplasmic segment spans residues 118 to 142 (VRYLYYFFMLVFKNGAPKILILLRY). A helical transmembrane segment spans residues 143–160 (NLFWILYPTGVASELRII). Catalysis depends on residues tyrosine 149 and glutamate 156. Residues 161–178 (YCALNAAESQYSLLYKRI) are Lumenal-facing. The chain crosses the membrane as a helical span at residues 179-196 (LIAAMLAYIPGFPMLFLH). At 197–217 (MVAQRKKVMKSLRSSFGKKLI) the chain is on the cytoplasmic side. Positions 214 to 217 (KKLI) match the Endoplasmic reticulum retention signal motif.

The protein belongs to the very long-chain fatty acids dehydratase HACD family.

It localises to the endoplasmic reticulum membrane. The protein localises to the vacuole membrane. It carries out the reaction a very-long-chain (3R)-3-hydroxyacyl-CoA = a very-long-chain (2E)-enoyl-CoA + H2O. The catalysed reaction is (3R)-hydroxyeicosanoyl-CoA = (2E)-eicosenoyl-CoA + H2O. It catalyses the reaction (3R)-hydroxydocosanoyl-CoA = (2E)-docosenoyl-CoA + H2O. The enzyme catalyses (3R)-hydroxyoctadecanoyl-CoA = (2E)-octadecenoyl-CoA + H2O. It carries out the reaction (3R)-hydroxytetracosanoyl-CoA = (2E)-tetracosenoyl-CoA + H2O. The catalysed reaction is (3R)-hydroxyhexacosanoyl-CoA = (2E)-hexacosenoyl-CoA + H2O. It catalyses the reaction (3R)-hydroxyhexadecanoyl-CoA = (2E)-hexadecenoyl-CoA + H2O. It participates in lipid metabolism; fatty acid biosynthesis. Its function is as follows. Catalyzes the third of the four reactions of the long-chain fatty acids elongation cycle. This endoplasmic reticulum-bound enzymatic process, allows the addition of two carbons to the chain of long- and very long-chain fatty acids/VLCFAs per cycle. This enzyme catalyzes the dehydration of the 3-hydroxyacyl-CoA intermediate into trans-2,3-enoyl-CoA, within each cycle of fatty acid elongation. Thereby, it participates in the production of VLCFAs of different chain lengths that are involved in multiple biological processes as precursors of membrane lipids and lipid mediators. This chain is Very-long-chain (3R)-3-hydroxyacyl-CoA dehydratase PHS1 (PHS1), found in Saccharomyces cerevisiae (strain ATCC 204508 / S288c) (Baker's yeast).